Here is a 242-residue protein sequence, read N- to C-terminus: Ras-like protein family member 11A (242 aa).

The segment at 17-241 is small GTPase-like; that stretch reads ESSSDYLLPK…SPKVKAPSAL (225 aa). GTP contacts are provided by residues 34 to 41, 81 to 85, and 147 to 150; these read GAGRVGKS, DTPGG, and NKGD.

Belongs to the small GTPase superfamily. Ras family. In terms of assembly, interacts with UBF/UBTF. Widely expressed. Down-regulated in prostate tumors compared to normal prostate tissue. High levels found in colon tumor and normal colon tissue followed by small intestine, liver, jejunum, ileum, bladder and aorta. Lowest levels observed in endothelial cells.

The protein resides in the nucleus. The protein localises to the nucleolus. It catalyses the reaction GTP + H2O = GDP + phosphate + H(+). Its function is as follows. Regulator of rDNA transcription. Acts in cooperation UBF/UBTF and positively regulates RNA polymerase I transcription. The sequence is that of Ras-like protein family member 11A from Homo sapiens (Human).